Reading from the N-terminus, the 240-residue chain is RNA polymerase sigma factor SigI (240 aa).

The short motif at aspartate 56–isoleucine 69 is the Polymerase core binding element. A DNA-binding region (H-T-H motif) is located at residues leucine 194–lysine 213.

It belongs to the sigma-70 factor family. SigI subfamily. In terms of assembly, interacts with RsgI.

It localises to the cytoplasm. Its activity is regulated as follows. Negatively regulated by the anti-sigma-I factor RsgI. Functionally, sigma factors are initiation factors that promote the attachment of RNA polymerase to specific initiation sites and are then released. This sigma factor contributes to both stress response and virulence gene expression. The sequence is that of RNA polymerase sigma factor SigI from Bacillus anthracis.